Reading from the N-terminus, the 195-residue chain is DnaJ homolog subfamily C member 5 (195 aa).

In terms of domain architecture, J spans 13 to 82; that stretch reads GDSLYIVLGL…RNIYDKYGSL (70 aa). The segment at 162–195 is disordered; sequence DMEKEGDGAIVVQPTSATETTQLTSDSHPSYHTE. Residues 174–189 are compositionally biased toward polar residues; sequence QPTSATETTQLTSDSH.

Post-translationally, palmitoylated. Palmitoylation occurs probably in the cysteine-rich domain and regulates DNAJC5 stable membrane attachment.

Its subcellular location is the cytoplasm. It localises to the cytosol. The protein resides in the membrane. It is found in the cytoplasmic vesicle. The protein localises to the secretory vesicle. Its subcellular location is the chromaffin granule membrane. It localises to the melanosome. The protein resides in the cell membrane. May have an important role in presynaptic function. May be involved in calcium-dependent neurotransmitter release at nerve endings. In Tetronarce californica (Pacific electric ray), this protein is DnaJ homolog subfamily C member 5.